A 425-amino-acid chain; its full sequence is Enolase (425 aa).

Gln163 serves as a coordination point for (2R)-2-phosphoglycerate. Glu205 serves as the catalytic Proton donor. Mg(2+) is bound by residues Asp242, Glu285, and Asp312. Residues Lys337, Arg366, Ser367, and Lys388 each contribute to the (2R)-2-phosphoglycerate site. Lys337 serves as the catalytic Proton acceptor.

The protein belongs to the enolase family. Mg(2+) serves as cofactor.

The protein localises to the cytoplasm. The protein resides in the secreted. Its subcellular location is the cell surface. It carries out the reaction (2R)-2-phosphoglycerate = phosphoenolpyruvate + H2O. The protein operates within carbohydrate degradation; glycolysis; pyruvate from D-glyceraldehyde 3-phosphate: step 4/5. Catalyzes the reversible conversion of 2-phosphoglycerate (2-PG) into phosphoenolpyruvate (PEP). It is essential for the degradation of carbohydrates via glycolysis. This chain is Enolase, found in Acidiphilium cryptum (strain JF-5).